A 323-amino-acid chain; its full sequence is Thioredoxin reductase (323 aa).

42–49 is a binding site for FAD; the sequence is YRAEADGA. A disulfide bridge connects residues Cys-143 and Cys-146. FAD is bound at residue 286 to 295; sequence DVLCNEVKQA.

The protein belongs to the class-II pyridine nucleotide-disulfide oxidoreductase family. Homodimer. The cofactor is FAD.

The protein resides in the cytoplasm. It catalyses the reaction [thioredoxin]-dithiol + NADP(+) = [thioredoxin]-disulfide + NADPH + H(+). The polypeptide is Thioredoxin reductase (trxB) (Aquifex aeolicus (strain VF5)).